The chain runs to 120 residues: Protein TCL1B4 (120 aa).

It belongs to the TCL1 family.

The polypeptide is Protein TCL1B4 (Tcl1b4) (Mus musculus (Mouse)).